The sequence spans 321 residues: Ribose-phosphate pyrophosphokinase 1 (321 aa).

The Mg(2+) site is built by aspartate 131, histidine 133, aspartate 142, and aspartate 146.

The protein belongs to the ribose-phosphate pyrophosphokinase family.

It catalyses the reaction D-ribose 5-phosphate + ATP = 5-phospho-alpha-D-ribose 1-diphosphate + AMP + H(+). This chain is Ribose-phosphate pyrophosphokinase 1 (PRS1), found in Candida albicans (Yeast).